The following is a 360-amino-acid chain: Peptide chain release factor 1 (360 aa).

The residue at position 235 (Q235) is an N5-methylglutamine. Over residues A291–R308 the composition is skewed to basic and acidic residues. Positions A291 to F312 are disordered.

This sequence belongs to the prokaryotic/mitochondrial release factor family. Methylated by PrmC. Methylation increases the termination efficiency of RF1.

It is found in the cytoplasm. In terms of biological role, peptide chain release factor 1 directs the termination of translation in response to the peptide chain termination codons UAG and UAA. This is Peptide chain release factor 1 from Yersinia pseudotuberculosis serotype O:1b (strain IP 31758).